Here is a 236-residue protein sequence, read N- to C-terminus: (5-formylfuran-3-yl)methyl phosphate synthase (236 aa).

The active-site Schiff-base intermediate with substrate is the Lys27. Lys85 acts as the Proton acceptor in catalysis.

The protein belongs to the MfnB family.

The catalysed reaction is 2 D-glyceraldehyde 3-phosphate = 4-(hydroxymethyl)-2-furancarboxaldehyde phosphate + phosphate + 2 H2O. The protein operates within cofactor biosynthesis; methanofuran biosynthesis. Functionally, catalyzes the formation of 4-(hydroxymethyl)-2-furancarboxaldehyde phosphate (4-HFC-P) from two molecules of glyceraldehyde-3-P (GA-3-P). In Methanococcus maripaludis (strain C7 / ATCC BAA-1331), this protein is (5-formylfuran-3-yl)methyl phosphate synthase.